Here is a 343-residue protein sequence, read N- to C-terminus: GDP-D-glucose phosphorylase 1 (343 aa).

Catalysis depends on His-183, which acts as the Tele-GMP-histidine intermediate.

The protein belongs to the GDPGP1 family.

It is found in the cytoplasm. It carries out the reaction GDP-alpha-D-glucose + phosphate = alpha-D-glucose 1-phosphate + GDP + H(+). Functionally, specific and highly efficient GDP-D-glucose phosphorylase regulating the levels of GDP-D-glucose in cells. This is GDP-D-glucose phosphorylase 1 (gdpgp1) from Danio rerio (Zebrafish).